A 405-amino-acid polypeptide reads, in one-letter code: ATP phosphoribosyltransferase regulatory subunit (405 aa).

This sequence belongs to the class-II aminoacyl-tRNA synthetase family. HisZ subfamily. As to quaternary structure, heteromultimer composed of HisG and HisZ subunits.

It localises to the cytoplasm. Its pathway is amino-acid biosynthesis; L-histidine biosynthesis; L-histidine from 5-phospho-alpha-D-ribose 1-diphosphate: step 1/9. Functionally, required for the first step of histidine biosynthesis. May allow the feedback regulation of ATP phosphoribosyltransferase activity by histidine. The sequence is that of ATP phosphoribosyltransferase regulatory subunit from Microcystis aeruginosa (strain NIES-843 / IAM M-2473).